We begin with the raw amino-acid sequence, 179 residues long: Large ribosomal subunit protein bL27c (179 aa).

A chloroplast-targeting transit peptide spans 1–51 (MAVSFSLVGAFKGLSLASSSSFLKGDFGAAFPVAPKFSVSFPLKSPLTIES).

This sequence belongs to the bacterial ribosomal protein bL27 family. In terms of assembly, part of the 50S ribosomal subunit.

It localises to the plastid. Its subcellular location is the chloroplast. The protein is Large ribosomal subunit protein bL27c (RPL27) of Nicotiana tabacum (Common tobacco).